The following is a 177-amino-acid chain: Acireductone dioxygenase (177 aa).

Residues H97, H99, E103, and H141 each contribute to the Fe(2+) site. 4 residues coordinate Ni(2+): H97, H99, E103, and H141.

This sequence belongs to the acireductone dioxygenase (ARD) family. In terms of assembly, monomer. Fe(2+) is required as a cofactor. Ni(2+) serves as cofactor.

The enzyme catalyses 1,2-dihydroxy-5-(methylsulfanyl)pent-1-en-3-one + O2 = 3-(methylsulfanyl)propanoate + CO + formate + 2 H(+). It catalyses the reaction 1,2-dihydroxy-5-(methylsulfanyl)pent-1-en-3-one + O2 = 4-methylsulfanyl-2-oxobutanoate + formate + 2 H(+). It functions in the pathway amino-acid biosynthesis; L-methionine biosynthesis via salvage pathway; L-methionine from S-methyl-5-thio-alpha-D-ribose 1-phosphate: step 5/6. Catalyzes 2 different reactions between oxygen and the acireductone 1,2-dihydroxy-3-keto-5-methylthiopentene (DHK-MTPene) depending upon the metal bound in the active site. Fe-containing acireductone dioxygenase (Fe-ARD) produces formate and 2-keto-4-methylthiobutyrate (KMTB), the alpha-ketoacid precursor of methionine in the methionine recycle pathway. Ni-containing acireductone dioxygenase (Ni-ARD) produces methylthiopropionate, carbon monoxide and formate, and does not lie on the methionine recycle pathway. This is Acireductone dioxygenase from Leptospira biflexa serovar Patoc (strain Patoc 1 / ATCC 23582 / Paris).